Reading from the N-terminus, the 219-residue chain is Large ribosomal subunit protein uL3 (219 aa).

The interval 136-156 (GASHGAHRNHRKPGSIGGCAT) is disordered.

The protein belongs to the universal ribosomal protein uL3 family. As to quaternary structure, part of the 50S ribosomal subunit. Forms a cluster with proteins L14 and L19.

One of the primary rRNA binding proteins, it binds directly near the 3'-end of the 23S rRNA, where it nucleates assembly of the 50S subunit. The protein is Large ribosomal subunit protein uL3 of Kineococcus radiotolerans (strain ATCC BAA-149 / DSM 14245 / SRS30216).